We begin with the raw amino-acid sequence, 666 residues long: UvrABC system protein B (666 aa).

One can recognise a Helicase ATP-binding domain in the interval Asn25–Arg412. Gly38 to Thr45 serves as a coordination point for ATP. The Beta-hairpin motif lies at Tyr91–Ile114. Positions Gln429–Ile595 constitute a Helicase C-terminal domain. Residues Asp622–Lys657 enclose the UVR domain.

The protein belongs to the UvrB family. As to quaternary structure, forms a heterotetramer with UvrA during the search for lesions. Interacts with UvrC in an incision complex.

It localises to the cytoplasm. In terms of biological role, the UvrABC repair system catalyzes the recognition and processing of DNA lesions. A damage recognition complex composed of 2 UvrA and 2 UvrB subunits scans DNA for abnormalities. Upon binding of the UvrA(2)B(2) complex to a putative damaged site, the DNA wraps around one UvrB monomer. DNA wrap is dependent on ATP binding by UvrB and probably causes local melting of the DNA helix, facilitating insertion of UvrB beta-hairpin between the DNA strands. Then UvrB probes one DNA strand for the presence of a lesion. If a lesion is found the UvrA subunits dissociate and the UvrB-DNA preincision complex is formed. This complex is subsequently bound by UvrC and the second UvrB is released. If no lesion is found, the DNA wraps around the other UvrB subunit that will check the other stand for damage. In Clostridium acetobutylicum (strain ATCC 824 / DSM 792 / JCM 1419 / IAM 19013 / LMG 5710 / NBRC 13948 / NRRL B-527 / VKM B-1787 / 2291 / W), this protein is UvrABC system protein B.